Reading from the N-terminus, the 239-residue chain is Uridylate kinase (239 aa).

12-15 serves as a coordination point for ATP; it reads KLSG. UMP is bound at residue G53. ATP contacts are provided by G54 and R58. Residues D73 and 135–142 each bind UMP; that span reads TGSPCFTT. Residues T162, Y168, and D171 each contribute to the ATP site.

Belongs to the UMP kinase family. As to quaternary structure, homohexamer.

It is found in the cytoplasm. It carries out the reaction UMP + ATP = UDP + ADP. Its pathway is pyrimidine metabolism; CTP biosynthesis via de novo pathway; UDP from UMP (UMPK route): step 1/1. Its activity is regulated as follows. Inhibited by UTP. In terms of biological role, catalyzes the reversible phosphorylation of UMP to UDP. In Ruthia magnifica subsp. Calyptogena magnifica, this protein is Uridylate kinase.